The primary structure comprises 661 residues: Putative lipase ATG15 (661 aa).

Residues 1–3 are Cytoplasmic-facing; it reads MIW. Residues 4-24 form a helical; Signal-anchor for type II membrane protein membrane-spanning segment; the sequence is NGRLVLACVLLIAGCSGQVDA. Residues 25–661 are Lumenal-facing; that stretch reads ARTREQRKAF…FDDFDPKNDL (637 aa). 5 N-linked (GlcNAc...) asparagine glycosylation sites follow: Asn155, Asn190, Asn212, Asn271, and Asn295. Ser311 functions as the Charge relay system in the catalytic mechanism. The N-linked (GlcNAc...) asparagine glycan is linked to Asn457. Disordered regions lie at residues 492-559 and 574-597; these read ESTT…TSTS and TTTSATPKPSSTARTVTKTKTTTS. Low complexity-rich tracts occupy residues 493–513, 527–559, and 574–595; these read STTSAPTTSTSTSSSTSSTRT, TTTSSSSSISSPSATPAPTITTTSSLPTSTSTS, and TTTSATPKPSSTARTVTKTKTT.

This sequence belongs to the AB hydrolase superfamily. Lipase family. As to quaternary structure, binds to both phosphatidylinositol (PI) and phosphatidylinositol 3,5-bisphosphate (PIP2).

The protein resides in the endosome. It localises to the multivesicular body membrane. Its subcellular location is the prevacuolar compartment membrane. The catalysed reaction is a triacylglycerol + H2O = a diacylglycerol + a fatty acid + H(+). In terms of biological role, lipase which is essential for lysis of subvacuolar cytoplasm to vacuole targeted bodies and intravacuolar autophagic bodies. Involved in the lysis of intravacuolar multivesicular body (MVB) vesicles. The intravacuolar membrane disintegration by ATG15 is critical to life span extension. The polypeptide is Putative lipase ATG15 (ATG15) (Passalora fulva (Tomato leaf mold)).